Reading from the N-terminus, the 335-residue chain is Methyltransferase pgmE (335 aa).

It belongs to the methyltransferase superfamily.

The protein operates within pigment biosynthesis. It participates in secondary metabolite biosynthesis. Methyltransferase; part of the gene cluster that mediates the biosynthesis of pleosporalin A, ascomycone A, as well as a third cryptic naphthoquinone derived pigment, all responsible for the coloration of conidia. Essential for the production of pleosporalin A, but not the 2 other final products. The pathway begins with the biosynthesis of the cyclized heptaketide 3-acetonyl-1,6,8-trihydroxy-2-naphthaldehyde by the NR-PKS pgmA. The C-6 hydroxyl group is further methylated by the O-methyltransferase pgmB to yield fusarubinaldehyde which is in turn oxidized by the cytochrome P450 monooxygenase pgmC at C-9. The C-1 hydroxyl group is then methylated spontaneously. Although pgmE, pgmD and pgmH are essential for the production of pleosporalin A, it is not the case for the 2 other final products and it remains difficult to assign a specific function to each enzyme. PgmF and pgmG seem not to be involved in pigment biosynthesis although they were regulated by the cluster-specific transcription factor pgmR. The chain is Methyltransferase pgmE from Aspergillus terreus.